We begin with the raw amino-acid sequence, 620 residues long: Chaperone protein HscA homolog (620 aa).

It belongs to the heat shock protein 70 family.

Its function is as follows. Chaperone involved in the maturation of iron-sulfur cluster-containing proteins. Has a low intrinsic ATPase activity which is markedly stimulated by HscB. This chain is Chaperone protein HscA homolog, found in Bordetella pertussis (strain Tohama I / ATCC BAA-589 / NCTC 13251).